The primary structure comprises 457 residues: Adenylosuccinate synthetase isozyme 2 A (457 aa).

GTP is bound by residues 40–46 (GDEGKGK) and 68–70 (GHT). D41 acts as the Proton acceptor in catalysis. Mg(2+) is bound by residues D41 and G68. Position 41 (D41) interacts with substrate. Residues 41–44 (DEGK), 66–69 (NAGH), T163, R177, N256, T271, and R335 each bind IMP. H69 functions as the Proton donor in the catalytic mechanism. Residue 331 to 337 (VTTGRKR) coordinates substrate. GTP-binding positions include R337, 363–365 (KLD), and 445–448 (GVGK).

This sequence belongs to the adenylosuccinate synthetase family. In terms of assembly, homodimer. Mg(2+) is required as a cofactor.

It localises to the cytoplasm. It is found in the mitochondrion. The catalysed reaction is IMP + L-aspartate + GTP = N(6)-(1,2-dicarboxyethyl)-AMP + GDP + phosphate + 2 H(+). Its pathway is purine metabolism; AMP biosynthesis via de novo pathway; AMP from IMP: step 1/2. With respect to regulation, inhibited competitively by AMP and IMP and non-competitively by fructose 1,6-bisphosphate. Its function is as follows. Plays an important role in the de novo pathway and in the salvage pathway of purine nucleotide biosynthesis. Catalyzes the first committed step in the biosynthesis of AMP from IMP. The chain is Adenylosuccinate synthetase isozyme 2 A (adss2-a) from Xenopus tropicalis (Western clawed frog).